The primary structure comprises 474 residues: Stabilizer of axonemal microtubules 1 (474 aa).

12 mn regions span residues 30 to 64 (KPCLLSEYTENYPFYHSYLPRESFKPRREYQKGPI), 65 to 97 (PMEGLTTSRRDFGPHKVAPVKVHQYDQFVPSEE), 98 to 131 (NMDLLTTYKKDYNPYPVCRVDPIKPRDSKYPCSD), 132 to 165 (KMECLPTYKADYLPWNQPRREPLRLEHKYQPASV), 166 to 199 (RFDNRTTHQDDYPIKGLVKTISCKPLAMPKLCNI), 200 to 232 (PLEDVTNYKMSYVAHPVEKRFVHEAEKFRPCEI), 233 to 266 (PFESLTTQKQSYRGLMGEPAKSLKPLARPPGLDM), 267 to 299 (PFCNTTEFRDKYQAWPMPRMFSKAPITYVPPED), 300 to 332 (RMDLLTTVQAHYTCPKGAPAQSCRPALQIKKCG), 333 to 366 (RFEGSSTTKDDYKQWSSMRTEPVKPVPQLDLPTE), 367 to 400 (PLDCLTTTRAHYVPHLPINTKSCKPHWSGPRGNV), and 401 to 434 (PVESQTTYTISFTPKEMGRCLASYPEPPGYTFEE). The segment at 446–474 (VSQAGSQQSSHLSVDDSENPNQRELEVLA) is disordered. Residues 448–457 (QAGSQQSSHL) show a composition bias toward polar residues.

This sequence belongs to the FAM154 family. As to quaternary structure, associates with microtubules via the Mn regions. In terms of tissue distribution, widely expressed, with highest levels in testis. Expressed in mature spermatozoa (at protein level).

The protein resides in the cytoplasm. The protein localises to the cytoskeleton. Its subcellular location is the microtubule organizing center. It is found in the centrosome. It localises to the centriole. The protein resides in the cilium basal body. The protein localises to the cilium axoneme. Its subcellular location is the flagellum axoneme. Functionally, may play a role in the regulation of cilium length. Stabilizes microtubules at low temperature. The polypeptide is Stabilizer of axonemal microtubules 1 (SAXO1) (Homo sapiens (Human)).